We begin with the raw amino-acid sequence, 138 residues long: Basic phospholipase A2 PLA-N (138 aa).

The signal sequence occupies residues 1–16; the sequence is MRTLWIMAVLLVGVEG. 7 disulfide bridges follow: Cys-42-Cys-131, Cys-44-Cys-60, Cys-59-Cys-111, Cys-65-Cys-138, Cys-66-Cys-104, Cys-73-Cys-97, and Cys-91-Cys-102. Ca(2+)-binding residues include Tyr-43, Gly-45, and Gly-47. Residue His-63 is part of the active site. A Ca(2+)-binding site is contributed by Asp-64. Residue Asp-105 is part of the active site.

This sequence belongs to the phospholipase A2 family. Group II subfamily. D49 sub-subfamily. It depends on Ca(2+) as a cofactor. Expressed by the venom gland.

It localises to the secreted. It carries out the reaction a 1,2-diacyl-sn-glycero-3-phosphocholine + H2O = a 1-acyl-sn-glycero-3-phosphocholine + a fatty acid + H(+). Its function is as follows. Snake venom phospholipase A2 (PLA2) that displays edema-inducing activities, as well as presynaptic neurotoxicity and myotoxicity. PLA2 catalyzes the calcium-dependent hydrolysis of the 2-acyl groups in 3-sn-phosphoglycerides. The protein is Basic phospholipase A2 PLA-N of Protobothrops flavoviridis (Habu).